The following is a 501-amino-acid chain: HMG-box protein STE11 (501 aa).

Over residues 142–153 the composition is skewed to polar residues; the sequence is PVNMVGSLSGSP. Disordered regions lie at residues 142–205 and 246–293; these read PVNM…KRPL and YAEM…SLEQ. The span at 192–204 shows a compositional bias: low complexity; the sequence is SRSGSSSSGIKRP. Positions 201–265 form a DNA-binding region, HMG box; sequence IKRPLNSFML…RHAKEYPDYK (65 aa). Basic and acidic residues predominate over residues 246–263; the sequence is YAEMAQRERERHAKEYPD.

Post-translationally, phosphorylated by MAPK2.

The protein localises to the nucleus. This Pneumocystis carinii protein is HMG-box protein STE11.